The sequence spans 413 residues: Alpha-1-antitrypsin-like protein GS55-LT (413 aa).

A signal peptide spans 1–21; the sequence is MPSSISWGLLLLAGLSCLATG. Asn-65, Asn-102, and Asn-123 each carry an N-linked (GlcNAc...) asparagine glycan. The segment at 368–387 is RCL; sequence RHTVKGPMALTLAPEVKFNR.

This sequence belongs to the serpin family.

It localises to the secreted. Functionally, inhibitor of serine proteases. The polypeptide is Alpha-1-antitrypsin-like protein GS55-LT (Ictidomys tridecemlineatus (Thirteen-lined ground squirrel)).